Reading from the N-terminus, the 415-residue chain is Tyrosine--tRNA ligase (415 aa).

L-tyrosine is bound at residue Tyr34. The 'HIGH' region signature appears at 39–48 (PTADSLHLGH). Residues Tyr164 and Gln168 each coordinate L-tyrosine. A 'KMSKS' region motif is present at residues 226-230 (KFGKS). Position 229 (Lys229) interacts with ATP. Residues 348 to 415 (KNIVDFLVDG…KKKYFLGKIK (68 aa)) form the S4 RNA-binding domain.

Belongs to the class-I aminoacyl-tRNA synthetase family. TyrS type 1 subfamily. In terms of assembly, homodimer.

It is found in the cytoplasm. The enzyme catalyses tRNA(Tyr) + L-tyrosine + ATP = L-tyrosyl-tRNA(Tyr) + AMP + diphosphate + H(+). Its function is as follows. Catalyzes the attachment of tyrosine to tRNA(Tyr) in a two-step reaction: tyrosine is first activated by ATP to form Tyr-AMP and then transferred to the acceptor end of tRNA(Tyr). In Leuconostoc citreum (strain KM20), this protein is Tyrosine--tRNA ligase.